A 258-amino-acid polypeptide reads, in one-letter code: F-box/LRR-repeat protein 25 (258 aa).

An F-box domain is found at 27-76; it reads SDSISNLPDEILHHILSFIPETNLVIRTSVLSKRWRHVWSKTPHLSFEWL. 4 LRR repeats span residues 101–130, 136–161, 177–202, and 224–249; these read CTSY…SLAF, CNKF…SLTP, RCNL…SLKF, and RRSC…RLRD.

This chain is F-box/LRR-repeat protein 25 (FBL25), found in Arabidopsis thaliana (Mouse-ear cress).